Consider the following 377-residue polypeptide: Succinyl-diaminopimelate desuccinylase (377 aa).

Position 68 (H68) interacts with Zn(2+). Residue D70 is part of the active site. D101 contributes to the Zn(2+) binding site. E135 acts as the Proton acceptor in catalysis. 3 residues coordinate Zn(2+): E136, E164, and H350.

It belongs to the peptidase M20A family. DapE subfamily. Homodimer. Zn(2+) is required as a cofactor. Co(2+) serves as cofactor.

The catalysed reaction is N-succinyl-(2S,6S)-2,6-diaminopimelate + H2O = (2S,6S)-2,6-diaminopimelate + succinate. It participates in amino-acid biosynthesis; L-lysine biosynthesis via DAP pathway; LL-2,6-diaminopimelate from (S)-tetrahydrodipicolinate (succinylase route): step 3/3. Catalyzes the hydrolysis of N-succinyl-L,L-diaminopimelic acid (SDAP), forming succinate and LL-2,6-diaminopimelate (DAP), an intermediate involved in the bacterial biosynthesis of lysine and meso-diaminopimelic acid, an essential component of bacterial cell walls. This chain is Succinyl-diaminopimelate desuccinylase, found in Vibrio cholerae serotype O1 (strain ATCC 39541 / Classical Ogawa 395 / O395).